Here is a 395-residue protein sequence, read N- to C-terminus: Phosphoglycerate kinase (395 aa).

Substrate-binding positions include 20 to 22 (DLN), Arg-35, 58 to 61 (HFGR), Arg-117, and Arg-150. ATP-binding positions include Lys-200, Glu-322, and 352–355 (GGDT).

This sequence belongs to the phosphoglycerate kinase family. As to quaternary structure, monomer.

Its subcellular location is the cytoplasm. The catalysed reaction is (2R)-3-phosphoglycerate + ATP = (2R)-3-phospho-glyceroyl phosphate + ADP. It functions in the pathway carbohydrate degradation; glycolysis; pyruvate from D-glyceraldehyde 3-phosphate: step 2/5. This chain is Phosphoglycerate kinase, found in Brucella suis biovar 1 (strain 1330).